The chain runs to 545 residues: Glucose-6-phosphate isomerase (545 aa).

Catalysis depends on Glu-351, which acts as the Proton donor. Residues His-382 and Lys-510 contribute to the active site.

This sequence belongs to the GPI family.

The protein localises to the cytoplasm. It catalyses the reaction alpha-D-glucose 6-phosphate = beta-D-fructose 6-phosphate. Its pathway is carbohydrate biosynthesis; gluconeogenesis. The protein operates within carbohydrate degradation; glycolysis; D-glyceraldehyde 3-phosphate and glycerone phosphate from D-glucose: step 2/4. Its function is as follows. Catalyzes the reversible isomerization of glucose-6-phosphate to fructose-6-phosphate. In Shewanella oneidensis (strain ATCC 700550 / JCM 31522 / CIP 106686 / LMG 19005 / NCIMB 14063 / MR-1), this protein is Glucose-6-phosphate isomerase.